The primary structure comprises 118 residues: Beta-elicitin cryptogein (118 aa).

An N-terminal signal peptide occupies residues 1–20 (MNFTALLAAVAAALVGSANA). Cystine bridges form between Cys-23/Cys-91, Cys-47/Cys-76, and Cys-71/Cys-115.

Belongs to the elicitin family.

It is found in the secreted. Functionally, induces local and distal defense responses (incompatible hypersensitive reaction) in plants from the solanaceae and cruciferae families. Elicits leaf necrosis and causes the accumulation of pathogenesis-related proteins. Might interact with the lipidic molecules of the plasma membrane. This chain is Beta-elicitin cryptogein, found in Phytophthora cryptogea.